Reading from the N-terminus, the 422-residue chain is NADP-dependent malic enzyme (422 aa).

Catalysis depends on Tyr39, which acts as the Proton donor. Catalysis depends on Lys94, which acts as the Proton acceptor. Lys94 lines the substrate pocket. Positions 136, 137, and 162 each coordinate a divalent metal cation. Residues 195-198 (AGAA), Asn286, and Asn318 contribute to the NADP(+) site. A substrate-binding site is contributed by Asn318.

This sequence belongs to the malic enzymes family. Mg(2+) serves as cofactor. Requires Mn(2+) as cofactor.

The enzyme catalyses (S)-malate + NADP(+) = pyruvate + CO2 + NADPH. It catalyses the reaction oxaloacetate + H(+) = pyruvate + CO2. In Halomonas elongata (strain ATCC 33173 / DSM 2581 / NBRC 15536 / NCIMB 2198 / 1H9), this protein is NADP-dependent malic enzyme.